A 190-amino-acid chain; its full sequence is MFNILKQVSDYAKGSIQAAKYIGEGLSVTFDHMRRRPITVQYPYEKLIPSERYRGRIHFEFDKCIACEVCVRVCPINLPVVDWTFNKEIKKKELKHYSIDFGVCIFCGNCVEYCPTNCLSMTEEYELASYDRHELNYDNVALGRLPYKVTQDPMVTPLRELGYLPKGVIEPHDLPAGSQRAGKRPEEITD.

4Fe-4S ferredoxin-type domains are found at residues 55–84 (GRIH…VDWT) and 95–124 (KHYS…MTEE). The [4Fe-4S] cluster site is built by Cys64, Cys67, Cys70, Cys74, Cys104, Cys107, Cys110, and Cys114. The interval 169-190 (IEPHDLPAGSQRAGKRPEEITD) is disordered.

Belongs to the complex I 23 kDa subunit family. NDH-1 is composed of at least 11 different subunits. [4Fe-4S] cluster serves as cofactor.

It is found in the cellular thylakoid membrane. It carries out the reaction a plastoquinone + NADH + (n+1) H(+)(in) = a plastoquinol + NAD(+) + n H(+)(out). It catalyses the reaction a plastoquinone + NADPH + (n+1) H(+)(in) = a plastoquinol + NADP(+) + n H(+)(out). NDH-1 shuttles electrons from an unknown electron donor, via FMN and iron-sulfur (Fe-S) centers, to quinones in the respiratory and/or the photosynthetic chain. The immediate electron acceptor for the enzyme in this species is believed to be plastoquinone. Couples the redox reaction to proton translocation, and thus conserves the redox energy in a proton gradient. This Microcystis aeruginosa (strain NIES-843 / IAM M-2473) protein is NAD(P)H-quinone oxidoreductase subunit I.